We begin with the raw amino-acid sequence, 240 residues long: Sulfite dehydrogenase subunit B (240 aa).

3 consecutive 4Fe-4S ferredoxin-type domains span residues 4–34, 64–95, and 97–126; these read LALV…WAGP, TETV…KRPD, and GVVL…LDAQ. Residues Cys13, Cys16, Cys19, Cys23, Cys73, Cys76, Cys81, Cys85, Cys106, Cys109, Cys112, and Cys116 each contribute to the [4Fe-4S] cluster site.

In terms of assembly, forms a heterotrimeric membrane-bound complex composed of a catalytic heterodimer (SoeAB) and a membrane anchor protein (SoeC). It depends on [4Fe-4S] cluster as a cofactor.

Its subcellular location is the cell inner membrane. Its function is as follows. Part of the SoeABC complex that catalyzes the oxidation of sulfite to sulfate. SoeB is probably the electron transfer subunit. The polypeptide is Sulfite dehydrogenase subunit B (Allochromatium vinosum (strain ATCC 17899 / DSM 180 / NBRC 103801 / NCIMB 10441 / D) (Chromatium vinosum)).